The chain runs to 264 residues: tRNA pseudouridine synthase A (264 aa).

Asp51 acts as the Nucleophile in catalysis. Tyr109 provides a ligand contact to substrate.

This sequence belongs to the tRNA pseudouridine synthase TruA family. In terms of assembly, homodimer.

It catalyses the reaction uridine(38/39/40) in tRNA = pseudouridine(38/39/40) in tRNA. In terms of biological role, formation of pseudouridine at positions 38, 39 and 40 in the anticodon stem and loop of transfer RNAs. The chain is tRNA pseudouridine synthase A from Staphylococcus aureus (strain MRSA252).